The following is a 398-amino-acid chain: uncharacterized protein (398 aa).

6 consecutive transmembrane segments (helical) span residues 37–57, 92–112, 122–142, 186–206, 228–248, and 268–288; these read LVILTIVAFFWGLLGVIFVQF, IFNAIFWLTQILFNVPFFIFG, LLTLYFVAVSNLFGFFFSYIP, LFYGLIWGFLQAVFYSVILII, IGGILMLINTVSFIIGYVIGT, and FGVAFFLSPNLVFTLLMNIVL.

The protein localises to the cell membrane. This is an uncharacterized protein from Mycoplasma genitalium (strain ATCC 33530 / DSM 19775 / NCTC 10195 / G37) (Mycoplasmoides genitalium).